The sequence spans 639 residues: UvrABC system protein C (639 aa).

Acidic residues predominate over residues 1–16 (MTDLPVDEPDRDDGAD). Residues 1 to 28 (MTDLPVDEPDRDDGADQPDAGADPATPR) form a disordered region. The span at 17–27 (QPDAGADPATP) shows a compositional bias: low complexity. Positions 42–120 (SSPGVYRMID…IKKLKPRYNI (79 aa)) constitute a GIY-YIG domain. The region spanning 230-265 (KALQHDLAKRMDEAAQALDYEQAAIFRDRIKALTNV) is the UVR domain.

This sequence belongs to the UvrC family. Interacts with UvrB in an incision complex.

The protein resides in the cytoplasm. The UvrABC repair system catalyzes the recognition and processing of DNA lesions. UvrC both incises the 5' and 3' sides of the lesion. The N-terminal half is responsible for the 3' incision and the C-terminal half is responsible for the 5' incision. This chain is UvrABC system protein C, found in Rhodospirillum rubrum (strain ATCC 11170 / ATH 1.1.1 / DSM 467 / LMG 4362 / NCIMB 8255 / S1).